We begin with the raw amino-acid sequence, 182 residues long: HGPRTase-like protein 1 (182 aa).

The protein belongs to the purine/pyrimidine phosphoribosyltransferase family. Archaeal HPRT subfamily.

May catalyze a purine salvage reaction, the substrate is unknown. The protein is HGPRTase-like protein 1 of Haloarcula marismortui (strain ATCC 43049 / DSM 3752 / JCM 8966 / VKM B-1809) (Halobacterium marismortui).